Reading from the N-terminus, the 454-residue chain is MRRFTLFVFFLSISIAYADFDFEDYNFATFNEIYDNEIPDDIPSSRHFLKSSRGTVGLPKTATEMMTRFNENLLNFLKSKSENDWKLIMELMSPDAFIETCMESAYGLSMDQFHKWITFLSNYYAEVGLTSTKIKDNSETGVTTELVYYTVLRNGEKGSDKWAMSATLNKKKGHFCINTLHMLSECKNIPKKPSLEPAIPIETFISSLKKKLVNDIFLNGGLHYKSAYESMYNYITPATKVFICDVGKMNGNQFVEYWYKRFGKVQTYSEHVFDISNNGTNWHVDFEVTYESEPGKFYRDRYQFSMNKYTNVKVEYFENFLDWRIYQIQQNCTESRTKMSKSDASVVKMALASRRWDQMLNKGLSWDTLQAFKEMFDKSKFHGYTCGMKFENWAKFDNWLTGFSNFYAKSVPKQTNVYAYQDSKIGFWIVNTMSAASDNSTSTHRVFFEGYYVC.

Residues M1–A18 form the signal peptide.

This is an uncharacterized protein from Caenorhabditis elegans.